Reading from the N-terminus, the 324-residue chain is Beta-ketoacyl-[acyl-carrier-protein] synthase III (324 aa).

Catalysis depends on residues cysteine 112 and histidine 249. Residues 250 to 254 (QANRR) are ACP-binding. Residue asparagine 279 is part of the active site.

This sequence belongs to the thiolase-like superfamily. FabH family. As to quaternary structure, homodimer.

It localises to the cytoplasm. It catalyses the reaction malonyl-[ACP] + acetyl-CoA + H(+) = 3-oxobutanoyl-[ACP] + CO2 + CoA. Its pathway is lipid metabolism; fatty acid biosynthesis. Its function is as follows. Catalyzes the condensation reaction of fatty acid synthesis by the addition to an acyl acceptor of two carbons from malonyl-ACP. Catalyzes the first condensation reaction which initiates fatty acid synthesis and may therefore play a role in governing the total rate of fatty acid production. Possesses both acetoacetyl-ACP synthase and acetyl transacylase activities. Its substrate specificity determines the biosynthesis of branched-chain and/or straight-chain of fatty acids. The sequence is that of Beta-ketoacyl-[acyl-carrier-protein] synthase III from Streptococcus equi subsp. zooepidemicus (strain H70).